The following is a 129-amino-acid chain: Iron-sulfur cluster assembly 1 homolog, mitochondrial (129 aa).

Residues 1–12 (MSASLVRATVRA) constitute a mitochondrion transit peptide. Fe cation contacts are provided by C57, C121, and C123.

It belongs to the HesB/IscA family. As to quaternary structure, interacts with CRY2, but not with CRY1 (in vitro).

It localises to the mitochondrion. Involved in the maturation of mitochondrial 4Fe-4S proteins functioning late in the iron-sulfur cluster assembly pathway. Probably involved in the binding of an intermediate of Fe/S cluster assembly. This is Iron-sulfur cluster assembly 1 homolog, mitochondrial (Isca1) from Rattus norvegicus (Rat).